The chain runs to 335 residues: S-adenosylmethionine:tRNA ribosyltransferase-isomerase (335 aa).

It belongs to the QueA family. As to quaternary structure, monomer.

It is found in the cytoplasm. The enzyme catalyses 7-aminomethyl-7-carbaguanosine(34) in tRNA + S-adenosyl-L-methionine = epoxyqueuosine(34) in tRNA + adenine + L-methionine + 2 H(+). Its pathway is tRNA modification; tRNA-queuosine biosynthesis. Its function is as follows. Transfers and isomerizes the ribose moiety from AdoMet to the 7-aminomethyl group of 7-deazaguanine (preQ1-tRNA) to give epoxyqueuosine (oQ-tRNA). The chain is S-adenosylmethionine:tRNA ribosyltransferase-isomerase from Thermosipho africanus (strain TCF52B).